The following is an 813-amino-acid chain: Leucine--tRNA ligase (813 aa).

A 'HIGH' region motif is present at residues 40–51; it reads SYPSGSKLHAGH. Residues 572–576 carry the 'KMSKS' region motif; sequence KMSKS. Lys575 contacts ATP.

Belongs to the class-I aminoacyl-tRNA synthetase family.

Its subcellular location is the cytoplasm. The catalysed reaction is tRNA(Leu) + L-leucine + ATP = L-leucyl-tRNA(Leu) + AMP + diphosphate. This chain is Leucine--tRNA ligase, found in Clostridium botulinum (strain ATCC 19397 / Type A).